Here is a 242-residue protein sequence, read N- to C-terminus: Small ribosomal subunit protein uS2 (242 aa).

Belongs to the universal ribosomal protein uS2 family.

This Photobacterium profundum (strain SS9) protein is Small ribosomal subunit protein uS2.